The primary structure comprises 201 residues: Protein FAR-RED-ELONGATED HYPOCOTYL 1-LIKE (201 aa).

The short motif at 32–35 is the Nuclear localization sequence (NLS) element; sequence KKRK. The short motif at 43-46 is the Nuclear export sequence (NES) element; that stretch reads LLPL.

It belongs to the FHY1 protein family. Homodimer and heterodimer with FHY1. Interacts with PHYA, especially upon far-red (FR) light illumination. Binds to LAF1 and HFR1. Inactivated by rapid reversible PHYA-mediated phosphorylation.

The protein resides in the nucleus. It is found in the cytoplasm. Can activate transcription. Essential for light-regulated PHYA nuclear accumulation and subsequent PHYA phototropic signaling processes. PHYA-specific signal transducer in response to continuous FR lights. Mediates the association of PHYA with HFR1 and LAF1 in the nucleus in response to FR conditions. Contributes to inhibition of hypocotyl elongation in continuous blue light (B). In Arabidopsis thaliana (Mouse-ear cress), this protein is Protein FAR-RED-ELONGATED HYPOCOTYL 1-LIKE.